The chain runs to 921 residues: Collagen alpha-1(IX) chain (921 aa).

The N-terminal stretch at 1–23 (MKTCWKIPVFFFVCSFLEPWASA) is a signal peptide. Residues 24-268 (AVKRRPRFPV…ITPSQTTDER (245 aa)) are nonhelical region (NC4). 2 disulfides stabilise this stretch: Cys44–Cys242 and Cys198–Cys252. In terms of domain architecture, Laminin G-like spans 50–244 (GQDDLPGFDL…LQWMLIHCDP (195 aa)). N-linked (GlcNAc...) asparagine glycosylation is present at Asn171. Positions 213, 215, and 253 each coordinate Zn(2+). Disordered stretches follow at residues 254 to 759 (ELPA…APTD) and 783 to 905 (RPDS…EPAS). Collagen-like domains are found at residues 269–324 (GPPG…TPGA), 325–356 (DGLTGPDGSPGSIGSKGQKGEPGVPGSRGFPG), 358–403 (GIPG…GTIG), 416–472 (PPGR…GLRG), 473–516 (ITGI…AGPK), 587–643 (EKGS…GKLG), 655–712 (GPPG…GEPG), and 713–755 (LRGP…PPGR). Positions 269–405 (GPPGEQGPPG…PGPRGTIGFH (137 aa)) are triple-helical region (COL3). Composition is skewed to pro residues over residues 273 to 285 (EQGPPGPPGPPGV) and 298 to 307 (KGPPGPPGPA). The span at 368–383 (TAGLPGELGRVGPVGD) shows a compositional bias: low complexity. Over residues 387–398 (RGPPGPPGPPGP) the composition is skewed to pro residues. The segment at 406–417 (DGDPLCPNACPP) is nonhelical region (NC3). Positions 418 to 756 (GRSGYPGLPG…PGVQGPPGRA (339 aa)) are triple-helical region (COL2). Positions 479–489 (DKGEKGARGLD) are enriched in basic and acidic residues. Composition is skewed to low complexity over residues 602-621 (NSGKPGQQGPPGEVGPRGPQ) and 630-650 (LGPVGSPGLPGKLGSLGSPGL). Residues 757 to 786 (PTDQHIKQVCMRVIQEHFAEMAASLKRPDS) form a nonhelical region (NC2) region. Residues 787–901 (GATGLPGRPG…PGPPGLPGFC (115 aa)) form a triple-helical region (COL1) region. Collagen-like domains are found at residues 790-847 (GLPG…GPPG) and 848-899 (RGPN…GLPG). A compositionally biased stretch (pro residues) spans 794–804 (RPGPPGPPGPP). The span at 833–845 (PKGDLGEKGERGP) shows a compositional bias: basic and acidic residues. The span at 888-897 (VPGPPGPPGL) shows a compositional bias: pro residues. The nonhelical region (NC1) stretch occupies residues 902 to 921 (EPASCTMQAGQRAFNKGPDP).

This sequence belongs to the fibril-associated collagens with interrupted helices (FACIT) family. Heterotrimer of an alpha 1(IX), an alpha 2(IX) and an alpha 3(IX) chain. Covalently linked to the telopeptides of type II collagen by lysine-derived cross-links. Post-translationally, prolines at the third position of the tripeptide repeating unit (G-X-Y) are hydroxylated in some or all of the chains.

It is found in the secreted. The protein localises to the extracellular space. It localises to the extracellular matrix. Structural component of hyaline cartilage and vitreous of the eye. In Homo sapiens (Human), this protein is Collagen alpha-1(IX) chain (COL9A1).